Here is a 324-residue protein sequence, read N- to C-terminus: Palmitoyltransferase SWF1 (324 aa).

M1 is a topological domain (lumenal). Residues 2-22 traverse the membrane as a helical segment; that stretch reads FLLFLLFVVSQVGLLVFSPKF. At 23-49 the chain is on the cytoplasmic side; sequence KDLILFRWYYQHIYYPLFTDYTRYRWK. A helical membrane pass occupies residues 50 to 70; that stretch reads YWLVPGFYACILIFCVHLFYN. Residues 71 to 84 lie on the Lumenal side of the membrane; the sequence is KLNDTVNPYLYSLE. The helical transmembrane segment at 85–105 threads the bilayer; sequence KAFIPITIAFTSLTGVASVFV. The Cytoplasmic segment spans residues 106–173; the sequence is KPLGLQAGPQ…VGYGNYEYFY (68 aa). The DHHC domain maps to 127 to 177; that stretch reads AVCQTCKTIKVPRSKHCPICERCIPLHDHHCIWINNCVGYGNYEYFYSFLL. The helical transmembrane segment at 174–194 threads the bilayer; it reads SFLLSNCLLLTYASLRLLTLF. Residues 195–203 are Lumenal-facing; the sequence is RITAFKKDK. Residues 204–224 traverse the membrane as a helical segment; it reads FFLSLFLLTTAFSLIAIVFTY. The Cytoplasmic portion of the chain corresponds to 225 to 324; that stretch reads YQLKLVNDGM…NLKERIHLLD (100 aa).

It belongs to the DHHC palmitoyltransferase family. SWF1 subfamily.

Its subcellular location is the endoplasmic reticulum membrane. The enzyme catalyses L-cysteinyl-[protein] + hexadecanoyl-CoA = S-hexadecanoyl-L-cysteinyl-[protein] + CoA. Palmitoyltransferase that targets several endosomal SNAREs. Palmitoylates the SNAREs at cysteine residues close to the cytoplasmic end of their transmembrane domain. May have a role in the cellular quality control of transmembrane domain-containing proteins. The polypeptide is Palmitoyltransferase SWF1 (SWF1) (Kluyveromyces lactis (strain ATCC 8585 / CBS 2359 / DSM 70799 / NBRC 1267 / NRRL Y-1140 / WM37) (Yeast)).